Reading from the N-terminus, the 552-residue chain is (R)-mandelonitrile lyase-like (552 aa).

The first 28 residues, 1–28 (MTKRIDSSLLYTALVVLLLLGVVHRSNA), serve as a signal peptide directing secretion. Residue Asn-44 is glycosylated (N-linked (GlcNAc...) asparagine). 55 to 82 (DYIIVGGGTAGCPLAATLSQSFRVLLLE) contacts FAD. Asn-162, Asn-259, and Asn-434 each carry an N-linked (GlcNAc...) asparagine glycan. The Proton acceptor role is filled by His-492.

Belongs to the GMC oxidoreductase family. As to quaternary structure, monomer. It depends on FAD as a cofactor. In terms of processing, glycosylated.

The enzyme catalyses (R)-mandelonitrile = benzaldehyde + hydrogen cyanide. In Arabidopsis thaliana (Mouse-ear cress), this protein is (R)-mandelonitrile lyase-like.